A 433-amino-acid chain; its full sequence is Forkhead box protein A2-B (433 aa).

The fork-head DNA-binding region spans 147–241 (KPPYSYISLI…ENGCYLRRQK (95 aa)). Residues 247–260 (KKPSLREGGGKKLS) are compositionally biased toward basic and acidic residues. 2 disordered regions span residues 247-337 (KKPS…QSHL) and 407-433 (SGLE…MNSS). Positions 261-282 (EGASSVGSVGNSSSERSVGNES) are enriched in low complexity. Positions 292–302 (EQKRSLVDMKS) are enriched in basic and acidic residues. Positions 315-331 (ASQAQHLLSQHHSVLSH) are enriched in low complexity. Polar residues predominate over residues 407–421 (SGLEPSPISSDTSYY).

It is found in the nucleus. Acts as a transcriptional activator during early development, limiting the extent of mesoderm formation in the gastrula. Binds to DNA via the target sequence 5'-GT[AC]AACA-3', with 5'-GTAAACA-3' being the preferred binding site. The protein is Forkhead box protein A2-B (foxa2-b) of Xenopus laevis (African clawed frog).